We begin with the raw amino-acid sequence, 548 residues long: MNKLIRRAVTIFAVTSVASLFASGVLETSMAESLSTNVISLADTKAKETTSHQKDRKARKNHQNRTSVVRKEVTAVRDTKAVEPRQDSCFGKMYTVKVNDDRNVEIVQSVPEYATVGSPYPIEITAIGKRDCVDVIITQQLPCEAEFVSSDPATTPTADGKLVWKIDRLGQGEKSKITVWVKPLKEGCCFTAATVCACPEIRSVTKCGQPAICVKQEGPESACLRCPVTYRINVVNQGTATARNVVVENPVPDGYAHASGQRVLTYTLGDMQPGEQRTITVEFCPLKRGRVTNIATVSYCGGHKNTASVTTVINEPCVQVNIEGADWSYVCKPVEYVISVSNPGDLVLRDVVIEDTLSPGITVVEAAGAQISCNKLVWTLKELNPGESLQYKVLVRAQTPGQFTNNVVVKSCSDCGICTSCAEATTYWKGVAATHMCVVDTCDPICVGENTVYRICVTNRGSAEDTNVSLILKFSKELQPISFSGPTKGTITGNTVVFDSLPRLGSKETVEFSVTLKAVSAGDARGEAILSSDTLTVPVSDTENTHIY.

Residues Met-1–Ala-22 form the signal peptide. The propeptide occupies Ser-23–Ser-40. A disordered region spans residues Lys-45–Arg-65. Over residues Lys-54–Gln-63 the composition is skewed to basic residues.

As to quaternary structure, part of a disulfide cross-linked outer membrane complex (COMC) composed of the major outer membrane porin (MOMP), the small cysteine-rich protein (OmcA) and the large cysteine-rich periplasmic protein (OmcB).

It localises to the periplasm. Its function is as follows. In elementary bodies (EBs, the infectious stage, which is able to survive outside the host cell) provides the structural integrity of the outer envelope through disulfide cross-links with the small cysteine-rich protein and the major outer membrane porin. It has been described in publications as the Sarkosyl-insoluble COMC (Chlamydia outer membrane complex), and serves as the functional equivalent of peptidoglycan. It is present but the disulfide bonds are reduced in reticulate bodies (RBs). This is Large cysteine-rich periplasmic protein OmcB (omcB) from Chlamydia muridarum (strain MoPn / Nigg).